A 351-amino-acid polypeptide reads, in one-letter code: Inner kinetochore subunit fta2 (351 aa).

The segment at 1–71 is disordered; the sequence is MSGRRYSQIS…SSNGRVDTDR (71 aa). Residues 7 to 18 are compositionally biased toward low complexity; that stretch reads SQISQQEGSSSS. Residues 54–66 show a composition bias toward polar residues; that stretch reads NENSGQSKSSNGR.

It belongs to the CENP-P/CTF19 family. As to quaternary structure, component of the heterotetrameric kinetochore subcomplex COMA, which consists of fta2, fta7, mal2 and mis17. The COMA subcomplex is part of a larger constitutive centromere-associated network (CCAN) (also known as central kinetochore Sim4 complex in fission yeast), which is composed of at least cnl2, cnp3, cnp20, fta1, fta2, fta3, fta4, fta6, fta7, mal2, mhf1, mhf2, mis6, mis15, mis17, sim4 and wip1.

Its subcellular location is the nucleus. The protein localises to the chromosome. It localises to the centromere. It is found in the kinetochore. Its function is as follows. Component of the kinetochore, a multiprotein complex that assembles on centromeric DNA and attaches chromosomes to spindle microtubules, mediating chromosome segregation and sister chromatid segregation during meiosis and mitosis. Component of the inner kinetochore COMA complex, which connects centromere-associated proteins and the outer kinetochore. COMA interacts with other inner kinetochore proteins to form the inner kinetochore constitutive centromere-associated network (CCAN), which serves as a structural platform for outer kinetochore assembly. Fta2, fta3 and fta4 associate with the central core (cnt) and inner repeat (inr) region of the centromere. This Schizosaccharomyces pombe (strain 972 / ATCC 24843) (Fission yeast) protein is Inner kinetochore subunit fta2 (fta2).